The primary structure comprises 152 residues: Syntaxin-8A (152 aa).

Positions 1 to 14 (MNNNNNFNSNFNSN) are enriched in low complexity. Positions 1-22 (MNNNNNFNSNFNSNRISSTQPY) are disordered. At 1-131 (MNNNNNFNSN…LTQQSKTTGY (131 aa)) the chain is on the cytoplasmic side. The t-SNARE coiled-coil homology domain maps to 60–122 (KRDMEEQDKM…RNTTKNLITL (63 aa)). Residues 132–152 (CSAICFLLLVLLVIIILASVL) traverse the membrane as a helical; Anchor for type IV membrane protein segment.

It belongs to the syntaxin family. Component of the SNARE complex composed of syn7A, syn8A, vamp7A and vti1A.

The protein resides in the endosome membrane. Involved in the targeting and/or fusion of transport vesicles to their target membrane during transport of proteins from the early endosome to the lysosome. Required for fusion of late endosomes with lysosomes and homotypic lysosomal fusion. This chain is Syntaxin-8A, found in Dictyostelium discoideum (Social amoeba).